Reading from the N-terminus, the 323-residue chain is Lipid A biosynthesis myristoyltransferase (323 aa).

The helical transmembrane segment at 23-43 threads the bilayer; the sequence is YWGAWLGVAAMAGIALTPPKF. The HXXXXD motif motif lies at 139–144; it reads HGWAVD.

The protein belongs to the LpxL/LpxM/LpxP family. LpxM subfamily.

Its subcellular location is the cell inner membrane. The catalysed reaction is alpha-Kdo-(2-&gt;4)-alpha-Kdo-(2-&gt;6)-(dodecanoyl)-lipid IVA (E. coli) + tetradecanoyl-[ACP] = alpha-Kdo-(2-&gt;4)-alpha-Kdo-(2-&gt;6)-lipid A (E. coli) + holo-[ACP]. It catalyses the reaction (9Z)-hexadecenoyl-(Kdo)2-lipid IVA (E. coli) + tetradecanoyl-[ACP] = ((9Z)-hexadecenoyl-tetradecanoyl)-(Kdo)2-lipid A + holo-[ACP]. Its pathway is glycolipid biosynthesis; KDO(2)-lipid A biosynthesis; KDO(2)-lipid A from CMP-3-deoxy-D-manno-octulosonate and lipid IV(A): step 4/4. The protein operates within bacterial outer membrane biogenesis; lipopolysaccharide biosynthesis. In terms of biological role, catalyzes the transfer of myristate from myristoyl-[acyl-carrier-protein] (ACP) to Kdo(2)-(lauroyl)-lipid IV(A) to form Kdo(2)-lipid A. Can probably also catalyze the transfer of myristate to Kdo(2)-(palmitoleoyl)-lipid IV(A) to form the cold-adapted Kdo(2)-lipid A. In vitro, can acylate Kdo(2)-lipid IV(A), but acylation of (KDO)2-(lauroyl)-lipid IV(A) is about 100 times faster. In vitro, can use lauroyl-ACP but displays a slight kinetic preference for myristoyl-ACP. This is Lipid A biosynthesis myristoyltransferase from Escherichia coli (strain K12).